We begin with the raw amino-acid sequence, 349 residues long: MLILGIESSCDETGVGIIELSDNGHMEIRADVVASSMEQHARFGGVVPEIASRAHLEAMPQVMKAALEEAGVEKPDAVAATVGPGLAGALLVGASAAKAFASAWGVPFYGVNHLGGHVAVANLEGEELPHSVALLVSGGHTQLLEVEAVGKPMKELGTTLDDAAGEAYDKVSRLLGLGYPGGPVIDKLAAQGKPTIDLPRGLSKAEDLRGPNRHNFSFSGLKTAVARHVEKAEREGTTVQVEDLCASFQEAVADVLTAKAVRACQDTGAKVLLLGGGVAANSRLRALAAKRCESAGIELRVPRFKLCTDNGVMIAAVAAQLIHEGAEPSGLACGTDTQLEVEVPLVAAR.

Fe cation-binding residues include His-113 and His-117. Substrate contacts are provided by residues 135–139 (LVSGG), Asp-169, Gly-182, Asp-186, and Asn-281. Fe cation is bound at residue Asp-309.

Belongs to the KAE1 / TsaD family. The cofactor is Fe(2+).

Its subcellular location is the cytoplasm. The enzyme catalyses L-threonylcarbamoyladenylate + adenosine(37) in tRNA = N(6)-L-threonylcarbamoyladenosine(37) in tRNA + AMP + H(+). In terms of biological role, required for the formation of a threonylcarbamoyl group on adenosine at position 37 (t(6)A37) in tRNAs that read codons beginning with adenine. Is involved in the transfer of the threonylcarbamoyl moiety of threonylcarbamoyl-AMP (TC-AMP) to the N6 group of A37, together with TsaE and TsaB. TsaD likely plays a direct catalytic role in this reaction. The protein is tRNA N6-adenosine threonylcarbamoyltransferase of Corynebacterium aurimucosum (strain ATCC 700975 / DSM 44827 / CIP 107346 / CN-1) (Corynebacterium nigricans).